A 249-amino-acid chain; its full sequence is 2,3-bisphosphoglycerate-dependent phosphoglycerate mutase (249 aa).

Substrate-binding positions include 8-15 (RHGESTWN), 21-22 (TG), R60, 87-90 (ERHY), K98, 114-115 (RR), and 183-184 (GN). The active-site Tele-phosphohistidine intermediate is H9. The Proton donor/acceptor role is filled by E87.

This sequence belongs to the phosphoglycerate mutase family. BPG-dependent PGAM subfamily.

It catalyses the reaction (2R)-2-phosphoglycerate = (2R)-3-phosphoglycerate. The protein operates within carbohydrate degradation; glycolysis; pyruvate from D-glyceraldehyde 3-phosphate: step 3/5. In terms of biological role, catalyzes the interconversion of 2-phosphoglycerate and 3-phosphoglycerate. The protein is 2,3-bisphosphoglycerate-dependent phosphoglycerate mutase of Methanoregula boonei (strain DSM 21154 / JCM 14090 / 6A8).